Reading from the N-terminus, the 136-residue chain is uncharacterized protein (136 aa).

Widely expressed.

This is an uncharacterized protein from Homo sapiens (Human).